The sequence spans 357 residues: Undecaprenyl-phosphate alpha-N-acetylglucosaminyl 1-phosphate transferase (357 aa).

The next 7 helical transmembrane spans lie at 40–60 (GAIP…FYLL), 64–84 (QMRL…IGMI), 124–144 (FQLT…IAAI), 183–203 (WSFA…GIPF), 209–229 (VFMG…ILLL), 238–258 (MNPV…IAIM), and 291–311 (FLLI…GEIF).

It belongs to the glycosyltransferase 4 family. WecA subfamily. Mg(2+) is required as a cofactor. Mn(2+) serves as cofactor.

The protein resides in the cell inner membrane. The catalysed reaction is di-trans,octa-cis-undecaprenyl phosphate + UDP-N-acetyl-alpha-D-glucosamine = N-acetyl-alpha-D-glucosaminyl-di-trans,octa-cis-undecaprenyl diphosphate + UMP. It participates in bacterial outer membrane biogenesis; LPS O-antigen biosynthesis. Functionally, catalyzes the transfer of the GlcNAc-1-phosphate moiety from UDP-GlcNAc onto the carrier lipid undecaprenyl phosphate (C55-P), yielding GlcNAc-pyrophosphoryl-undecaprenyl (GlcNAc-PP-C55). The sequence is that of Undecaprenyl-phosphate alpha-N-acetylglucosaminyl 1-phosphate transferase from Pasteurella multocida (strain Pm70).